The sequence spans 860 residues: Valine--tRNA ligase (860 aa).

Residues 53–63 carry the 'HIGH' region motif; that stretch reads PNLTGILHIGH. A 'KMSKS' region motif is present at residues 527-531; it reads KMSKS. Residue Lys530 coordinates ATP. Residues 794–860 adopt a coiled-coil conformation; that stretch reads QDKTKIVDKL…LKQDKLNSLK (67 aa).

Belongs to the class-I aminoacyl-tRNA synthetase family. ValS type 1 subfamily. As to quaternary structure, monomer.

It is found in the cytoplasm. It catalyses the reaction tRNA(Val) + L-valine + ATP = L-valyl-tRNA(Val) + AMP + diphosphate. Catalyzes the attachment of valine to tRNA(Val). As ValRS can inadvertently accommodate and process structurally similar amino acids such as threonine, to avoid such errors, it has a 'posttransfer' editing activity that hydrolyzes mischarged Thr-tRNA(Val) in a tRNA-dependent manner. This is Valine--tRNA ligase from Mycoplasmoides gallisepticum (strain R(low / passage 15 / clone 2)) (Mycoplasma gallisepticum).